The chain runs to 457 residues: Argininosuccinate lyase (457 aa).

This sequence belongs to the lyase 1 family. Argininosuccinate lyase subfamily.

Its subcellular location is the cytoplasm. It catalyses the reaction 2-(N(omega)-L-arginino)succinate = fumarate + L-arginine. It participates in amino-acid biosynthesis; L-arginine biosynthesis; L-arginine from L-ornithine and carbamoyl phosphate: step 3/3. This Klebsiella pneumoniae (strain 342) protein is Argininosuccinate lyase.